A 313-amino-acid polypeptide reads, in one-letter code: Ribosomal RNA small subunit methyltransferase H (313 aa).

S-adenosyl-L-methionine-binding positions include 35-37 (GGH), Asp-55, Phe-80, Asp-102, and Gln-109.

The protein belongs to the methyltransferase superfamily. RsmH family.

The protein localises to the cytoplasm. The enzyme catalyses cytidine(1402) in 16S rRNA + S-adenosyl-L-methionine = N(4)-methylcytidine(1402) in 16S rRNA + S-adenosyl-L-homocysteine + H(+). Specifically methylates the N4 position of cytidine in position 1402 (C1402) of 16S rRNA. The protein is Ribosomal RNA small subunit methyltransferase H of Shewanella sp. (strain MR-4).